Reading from the N-terminus, the 72-residue chain is MDARTPEVPCGDLLQNAAENLLQEVEEHFQALTATLNLRMEEMGNRIEDLQRNVDDLMAQAGIENSIKEATT.

A coiled-coil region spans residues 12–66 (DLLQNAAENLLQEVEEHFQALTATLNLRMEEMGNRIEDLQRNVDDLMAQAGIENS).

It belongs to the HSBP1 family.

In Rattus norvegicus (Rat), this protein is Heat shock factor-binding protein 1-like protein 1 (Hsbp1l1).